We begin with the raw amino-acid sequence, 644 residues long: MLRKAFRYLVPVRCKSNSSIAGASTAGTSPSLPQTLQRRIEEIPLERYRNFSIVAHVDHGKSTLSDRLLELTGVVKPGAKQVLDKLEVERERGITVKAQTCSMFYHDKRTGLDYLLHLVDTPGHVDFRSEVSRSYASCGGALLLVDASQGVQAQTVANFYLAYSMNLKLLPVINKIDLSVANIAQAEDQVEDMFELPREDIVRVSAKTGLNVADLLPAIVDRIPPPTGYVEKPFRALLVDSWYDSYLGVVLLVYCVDGMVKKGDKIVSAHTSNKYEVKEVGIMYPERVATGKLSTGQVGYLVPGFKNSRDAKIGDTLMHQGRESETEVLPGFEEQKPMVFVGAFPADGAEFKALDDDIQRLVLNDRSVTLQRETSNALGQGWRLGFLGSLHASVFKERLENEYGSKLIITQPTVPYVVEYSDGTQITVTNPDDFPDLTLRRTKIKNFQEPYVEAIMTLPQDYLGRVITLCDDNRGIQKEITYINTTGQVMLKYDIPLAHLVDDFFGKLKSVTHGYASLDYEDAGYKPSDIVKMELLVNGKGVDALAQVMHRSQTERVAKEWVRKFKQYVKSQLYEVVIQAKANNKVLARETIKARRKDVLAKLHASDVSRRKKLLVKQKEGKKQMRSIGNVHIDQEAYQAFLRK.

The N-terminal 14 residues, 1–14 (MLRKAFRYLVPVRC), are a transit peptide targeting the mitochondrion. The tr-type G domain occupies 46–227 (ERYRNFSIVA…AIVDRIPPPT (182 aa)). Residues 55–62 (AHVDHGKS), 120–124 (DTPGH), and 174–177 (NKID) each bind GTP.

It belongs to the TRAFAC class translation factor GTPase superfamily. Classic translation factor GTPase family. LepA subfamily.

It localises to the mitochondrion inner membrane. It carries out the reaction GTP + H2O = GDP + phosphate + H(+). Promotes mitochondrial protein synthesis. May act as a fidelity factor of the translation reaction, by catalyzing a one-codon backward translocation of tRNAs on improperly translocated ribosomes. Binds to mitochondrial ribosomes in a GTP-dependent manner. This Eremothecium gossypii (strain ATCC 10895 / CBS 109.51 / FGSC 9923 / NRRL Y-1056) (Yeast) protein is Translation factor GUF1, mitochondrial.